The sequence spans 104 residues: Putative ankyrin repeat protein L677 (104 aa).

ANK repeat units lie at residues 16-43 (FNKSSLEIACIENDIGTVKKIINLNPNL), 44-73 (DISHCLNLAIESKNYQIVKFLLKKNISNSV), and 75-102 (LEAYDCACINGKISIMELLIQYLNNKSI).

In Acanthamoeba polyphaga (Amoeba), this protein is Putative ankyrin repeat protein L677.